We begin with the raw amino-acid sequence, 210 residues long: Holliday junction resolvase RecU (210 aa).

The tract at residues 1–34 is disordered; the sequence is MAFHYPNGQPYSNHETKQPKKQGRHTSPTTLYGK. Positions 90, 92, 105, and 124 each coordinate Mg(2+).

Belongs to the RecU family. The cofactor is Mg(2+).

The protein localises to the cytoplasm. It carries out the reaction Endonucleolytic cleavage at a junction such as a reciprocal single-stranded crossover between two homologous DNA duplexes (Holliday junction).. Functionally, endonuclease that resolves Holliday junction intermediates in genetic recombination. Cleaves mobile four-strand junctions by introducing symmetrical nicks in paired strands. Promotes annealing of linear ssDNA with homologous dsDNA. Required for DNA repair, homologous recombination and chromosome segregation. This Latilactobacillus sakei subsp. sakei (strain 23K) (Lactobacillus sakei subsp. sakei) protein is Holliday junction resolvase RecU.